We begin with the raw amino-acid sequence, 62 residues long: Inner membrane protein p12 (62 aa).

The chain crosses the membrane as a helical span at residues 16 to 36; it reads LLIVAIVVVIMAIMLYYFWWM.

This sequence belongs to the asfivirus inner membrane protein p12 family. In terms of assembly, homomultimer; disulfide-linked. Post-translationally, not glycosylated.

The protein localises to the virion membrane. The protein is Inner membrane protein p12 of African swine fever virus (isolate Pig/Kenya/KEN-50/1950) (ASFV).